A 131-amino-acid chain; its full sequence is Single-stranded DNA-binding protein 2 (131 aa).

In terms of domain architecture, SSB spans 1 to 103 (MYNKVIMIGR…VLASSFQLLE (103 aa)). Positions 126–131 (EEELPF) match the Important for interaction with partner proteins motif.

In terms of assembly, homotetramer.

Plays an important role in DNA replication, recombination and repair. Binds to ssDNA and to an array of partner proteins to recruit them to their sites of action during DNA metabolism. In Streptococcus agalactiae serotype III (strain NEM316), this protein is Single-stranded DNA-binding protein 2 (ssb2).